We begin with the raw amino-acid sequence, 237 residues long: Putative N-acetylmannosamine-6-phosphate 2-epimerase (237 aa).

Belongs to the NanE family.

The catalysed reaction is an N-acyl-D-glucosamine 6-phosphate = an N-acyl-D-mannosamine 6-phosphate. The protein operates within amino-sugar metabolism; N-acetylneuraminate degradation; D-fructose 6-phosphate from N-acetylneuraminate: step 3/5. Converts N-acetylmannosamine-6-phosphate (ManNAc-6-P) to N-acetylglucosamine-6-phosphate (GlcNAc-6-P). This Listeria monocytogenes serovar 1/2a (strain ATCC BAA-679 / EGD-e) protein is Putative N-acetylmannosamine-6-phosphate 2-epimerase.